Reading from the N-terminus, the 437-residue chain is Glutamate-1-semialdehyde 2,1-aminomutase (437 aa).

Lysine 274 carries the N6-(pyridoxal phosphate)lysine modification.

The protein belongs to the class-III pyridoxal-phosphate-dependent aminotransferase family. HemL subfamily. In terms of assembly, homodimer. Requires pyridoxal 5'-phosphate as cofactor.

The protein resides in the cytoplasm. The catalysed reaction is (S)-4-amino-5-oxopentanoate = 5-aminolevulinate. The protein operates within porphyrin-containing compound metabolism; protoporphyrin-IX biosynthesis; 5-aminolevulinate from L-glutamyl-tRNA(Glu): step 2/2. This Verminephrobacter eiseniae (strain EF01-2) protein is Glutamate-1-semialdehyde 2,1-aminomutase.